The sequence spans 360 residues: LETM1 domain-containing protein 1 (360 aa).

Positions 1–110 (MALSRVCWAR…KKARRIKTNM (110 aa)) are required and sufficient for mitochondrial import. Over 1-137 (MALSRVCWAR…LRQFRQDVTK (137 aa)) the chain is Cytoplasmic. A helical transmembrane segment spans residues 138–158 (CLFLGIISIPPFANYLVFLLM). Residues 159 to 360 (YLFPRQLLIR…LSTNYLGTRR (202 aa)) lie on the Mitochondrial intermembrane side of the membrane. Residues 186–360 (FRKQSHPEII…LSTNYLGTRR (175 aa)) enclose the Letm1 RBD domain.

Interacts with BRI3BP. Interacts (via C-terminal) with SMARCA4; the interaction regulates transcriptional expression of thermogenic genes in brown adipose tissue. In terms of tissue distribution, kidney, liver, skeletal muscle, heart and brain. Overexpressed in various tumors including leukemia, lymphoma, and carcinomas of the breast, kidney, ovary, stomach, colon and uterine cervix.

It is found in the mitochondrion outer membrane. It localises to the nucleus. Its subcellular location is the mitochondrion inner membrane. Its function is as follows. Plays an essential role for mitochondrial structure and function, as well as thermogenesis of brown adipocytes. In brown adipose tissue also localizes in the nucleus where it interacts with the chromatin remodeler SMARCA4 to regulate thermogenic genes expression, such as UCP1. May regulate phagocytosis and inflammatory responses to lipopolysaccharide in macrophages. Involved in tumorigenesis and may function as a negative regulator of the p53/TP53. The protein is LETM1 domain-containing protein 1 of Homo sapiens (Human).